A 506-amino-acid polypeptide reads, in one-letter code: Alpha-1,3/1,6-mannosyltransferase alg2 (506 aa).

2 helical membrane-spanning segments follow: residues 82–104 (SIFG…MILL) and 118–138 (LSTC…YCHF). Asn-299 is a glycosylation site (N-linked (GlcNAc...) asparagine). 2 consecutive transmembrane segments (helical) span residues 443–463 (LLAV…AATV) and 481–501 (LGFM…TVYA).

It belongs to the glycosyltransferase group 1 family. Glycosyltransferase 4 subfamily.

The protein resides in the endoplasmic reticulum membrane. The enzyme catalyses a beta-D-Man-(1-&gt;4)-beta-D-GlcNAc-(1-&gt;4)-alpha-D-GlcNAc-diphospho-di-trans,poly-cis-dolichol + GDP-alpha-D-mannose = an alpha-D-Man-(1-&gt;3)-beta-D-Man-(1-&gt;4)-beta-D-GlcNAc-(1-&gt;4)-alpha-D-GlcNAc-diphospho-di-trans,poly-cis-dolichol + GDP + H(+). It carries out the reaction an alpha-D-Man-(1-&gt;3)-beta-D-Man-(1-&gt;4)-beta-D-GlcNAc-(1-&gt;4)-alpha-D-GlcNAc-diphospho-di-trans,poly-cis-dolichol + GDP-alpha-D-mannose = an alpha-D-Man-(1-&gt;3)-[alpha-D-Man-(1-&gt;6)]-beta-D-Man-(1-&gt;4)-beta-D-GlcNAc-(1-&gt;4)-alpha-D-GlcNAc-diphospho-di-trans,poly-cis-dolichol + GDP + H(+). The protein operates within protein modification; protein glycosylation. Functionally, mannosylates Man(2)GlcNAc(2)-dolichol diphosphate and Man(1)GlcNAc(2)-dolichol diphosphate to form Man(3)GlcNAc(2)-dolichol diphosphate. This is Alpha-1,3/1,6-mannosyltransferase alg2 (alg2) from Schizosaccharomyces pombe (strain 972 / ATCC 24843) (Fission yeast).